The primary structure comprises 146 residues: Sperm surface protein Sp17 (146 aa).

Over residues 76 to 88 (EHESEKCEAEEKS) the composition is skewed to basic and acidic residues. A disordered region spans residues 76–109 (EHESEKCEAEEKSQSVTEEETPVLTIDSEDDKDK). A compositionally biased stretch (acidic residues) spans 92 to 108 (TEEETPVLTIDSEDDKD). The IQ domain occupies 110–139 (EEMAALKIQAAFRGHLAREDVKKIRTNKAE).

In terms of assembly, homodimer. May interact with ROPN1. In terms of processing, the N-terminus is blocked. Testis- and sperm-specific.

Its subcellular location is the membrane. Functionally, sperm surface zona pellucida binding protein. Helps to bind spermatozoa to the zona pellucida with high affinity. Might function in binding zona pellucida and carbohydrates. In Oryctolagus cuniculus (Rabbit), this protein is Sperm surface protein Sp17 (SPA17).